Here is a 134-residue protein sequence, read N- to C-terminus: Large ribosomal subunit protein uL16c (134 aa).

The interval 1 to 21 is disordered; sequence MLSPKRTKYRKHHRGRMRGKA.

The protein belongs to the universal ribosomal protein uL16 family. Part of the 50S ribosomal subunit.

Its subcellular location is the plastid. The protein resides in the chloroplast. This Chlorella vulgaris (Green alga) protein is Large ribosomal subunit protein uL16c.